The sequence spans 147 residues: UPF0306 protein YpAngola_A4021 (147 aa).

It belongs to the UPF0306 family.

In Yersinia pestis bv. Antiqua (strain Angola), this protein is UPF0306 protein YpAngola_A4021.